The chain runs to 51 residues: Lipid-anchored plasma membrane protein CPP3 (51 aa).

The tract at residues 1–28 is disordered; it reads MRHHQNMHYAPQQQPVYVQQPPPRRESG.

This sequence belongs to the CYSTM1 family. Palmitoylated near the C-terminus.

It is found in the cell membrane. The sequence is that of Lipid-anchored plasma membrane protein CPP3 from Saccharomyces cerevisiae (strain ATCC 204508 / S288c) (Baker's yeast).